The primary structure comprises 102 residues: Protein RnfH (102 aa).

Belongs to the UPF0125 (RnfH) family.

The polypeptide is Protein RnfH (Pseudomonas entomophila (strain L48)).